The chain runs to 183 residues: Archaemetzincin (183 aa).

His131 contributes to the Zn(2+) binding site. Residue Glu132 is the Proton acceptor of the active site. Residues His135, His141, Cys142, Cys147, Cys166, and Cys169 each contribute to the Zn(2+) site.

This sequence belongs to the peptidase M54 family. Monomer. Zn(2+) serves as cofactor.

In terms of biological role, probable zinc metalloprotease whose natural substrate is unknown. In Saccharolobus islandicus (strain L.S.2.15 / Lassen #1) (Sulfolobus islandicus), this protein is Archaemetzincin.